The following is a 613-amino-acid chain: Cleavage and polyadenylation specificity factor subunit 3-II (613 aa).

Positions H67–H72 match the HXHXDH motif motif.

This sequence belongs to the metallo-beta-lactamase superfamily. RNA-metabolizing metallo-beta-lactamase-like family. INTS11 subfamily. In terms of assembly, component of the CPSF complex, at least composed of CPSF160, CPSF100, CPSF73-I, CPSF73-II, CPSF30, FY and FIPS5. Interacts with CPSF30, CPSF100, CPSF160 and FY. As to expression, highly expressed in senescence leaves, petals, stamens, pollen and late stages of siliques with seeds. Also detected in roots, stems, leaves and seedlings.

The protein resides in the nucleus. Its function is as follows. Component of the cleavage and polyadenylation specificity factor (CPSF) complex that play a key role in pre-mRNA 3'-end formation, recognizing the AAUAAA signal sequence and interacting with poly(A) polymerase and other factors to bring about cleavage and poly(A) addition. May function as mRNA 3'-end-processing endonuclease and also be involved in the histone 3'-end pre-mRNA processing. The sequence is that of Cleavage and polyadenylation specificity factor subunit 3-II (CPSF73-II) from Arabidopsis thaliana (Mouse-ear cress).